A 300-amino-acid polypeptide reads, in one-letter code: Protoheme IX farnesyltransferase (300 aa).

9 consecutive transmembrane segments (helical) span residues 28-48 (VVAL…PTIL), 50-70 (VQPL…AAAL), 100-120 (ALIF…VFTN), 122-142 (LTAW…TAYL), 149-169 (NIVI…TAVT), 176-196 (ALLL…ALAI), 222-242 (CILL…LVGM), 243-263 (SGPL…YKAW), and 280-300 (FSIY…YLWA).

This sequence belongs to the UbiA prenyltransferase family. Protoheme IX farnesyltransferase subfamily.

Its subcellular location is the cell inner membrane. The enzyme catalyses heme b + (2E,6E)-farnesyl diphosphate + H2O = Fe(II)-heme o + diphosphate. It participates in porphyrin-containing compound metabolism; heme O biosynthesis; heme O from protoheme: step 1/1. Functionally, converts heme B (protoheme IX) to heme O by substitution of the vinyl group on carbon 2 of heme B porphyrin ring with a hydroxyethyl farnesyl side group. This chain is Protoheme IX farnesyltransferase, found in Shewanella oneidensis (strain ATCC 700550 / JCM 31522 / CIP 106686 / LMG 19005 / NCIMB 14063 / MR-1).